The chain runs to 419 residues: CinA-like protein (419 aa).

The protein belongs to the CinA family.

In Synechococcus sp. (strain CC9902), this protein is CinA-like protein.